Reading from the N-terminus, the 143-residue chain is Nucleoside diphosphate kinase (143 aa).

Positions 11, 59, 87, 93, 104, and 114 each coordinate ATP. The active-site Pros-phosphohistidine intermediate is H117.

The protein belongs to the NDK family. Homotetramer. Mg(2+) serves as cofactor.

It is found in the cytoplasm. It catalyses the reaction a 2'-deoxyribonucleoside 5'-diphosphate + ATP = a 2'-deoxyribonucleoside 5'-triphosphate + ADP. The catalysed reaction is a ribonucleoside 5'-diphosphate + ATP = a ribonucleoside 5'-triphosphate + ADP. In terms of biological role, major role in the synthesis of nucleoside triphosphates other than ATP. The ATP gamma phosphate is transferred to the NDP beta phosphate via a ping-pong mechanism, using a phosphorylated active-site intermediate. The polypeptide is Nucleoside diphosphate kinase (Shewanella sp. (strain MR-4)).